The sequence spans 306 residues: Glutaminase (306 aa).

Substrate contacts are provided by serine 64, asparagine 115, glutamate 159, asparagine 166, tyrosine 190, tyrosine 242, and valine 260.

It belongs to the glutaminase family. In terms of assembly, homotetramer.

The catalysed reaction is L-glutamine + H2O = L-glutamate + NH4(+). The chain is Glutaminase from Aliivibrio salmonicida (strain LFI1238) (Vibrio salmonicida (strain LFI1238)).